Here is a 118-residue protein sequence, read N- to C-terminus: Large ribosomal subunit protein uL18 (118 aa).

This sequence belongs to the universal ribosomal protein uL18 family. Part of the 50S ribosomal subunit; part of the 5S rRNA/L5/L18/L25 subcomplex. Contacts the 5S and 23S rRNAs.

In terms of biological role, this is one of the proteins that bind and probably mediate the attachment of the 5S RNA into the large ribosomal subunit, where it forms part of the central protuberance. This chain is Large ribosomal subunit protein uL18, found in Campylobacter concisus (strain 13826).